We begin with the raw amino-acid sequence, 142 residues long: Pro-Viral epidermal growth factor (142 aa).

The N-terminal stretch at Met1–Ala19 is a signal peptide. The Extracellular segment spans residues Asp20–Leu104. The N-linked (GlcNAc...) asparagine; by host glycan is linked to Asn34. Residues Cys71 and Cys80 are joined by a disulfide bond. A helical membrane pass occupies residues Gly105–Phe125. Over Thr126–Leu142 the chain is Cytoplasmic.

This sequence belongs to the orthopoxvirus OPG019 family. Interacts with host EGFR. Post-translationally, cleaved at the cell surface by host ADAM10, thereby releasing the secreted form of VGF.

It is found in the host membrane. It localises to the secreted. Functionally, stimulates cellular proliferation (hyperplasia)and mobility around infected cells to promote rapid and efficient spread of infection. This effect is beneficial for virus replication in vivo, because poxviruses replicate possibly better in proliferating cells than in quiescent cells. Acts by binding host EGFR, inducing its dimerization, autophosphorylation and leading to activation of several cellular pathways regulating cell proliferation or cell survival. The activation by host EGFR of mitogen activated protein kinases (MAPK) and extracellular-signal regulated kinases (ERK) are essential for the positive effect of vaccinia growth factor on poxvirus virulence in vivo. The polypeptide is Pro-Viral epidermal growth factor (OPG019) (Cynomys gunnisoni (Gunnison's prairie dog)).